Here is a 352-residue protein sequence, read N- to C-terminus: 3-dehydroquinate synthase (352 aa).

Residues 60-65 (DGEGAK), 118-119 (TT), lysine 131, lysine 140, and 158-161 (FLET) contribute to the NAD(+) site. The Zn(2+) site is built by glutamate 173, histidine 237, and histidine 253.

The protein belongs to the sugar phosphate cyclases superfamily. Dehydroquinate synthase family. It depends on NAD(+) as a cofactor. Co(2+) is required as a cofactor. Zn(2+) serves as cofactor.

It localises to the cytoplasm. It carries out the reaction 7-phospho-2-dehydro-3-deoxy-D-arabino-heptonate = 3-dehydroquinate + phosphate. The protein operates within metabolic intermediate biosynthesis; chorismate biosynthesis; chorismate from D-erythrose 4-phosphate and phosphoenolpyruvate: step 2/7. Catalyzes the conversion of 3-deoxy-D-arabino-heptulosonate 7-phosphate (DAHP) to dehydroquinate (DHQ). In Sulfurisphaera tokodaii (strain DSM 16993 / JCM 10545 / NBRC 100140 / 7) (Sulfolobus tokodaii), this protein is 3-dehydroquinate synthase.